Consider the following 338-residue polypeptide: Phenylalanine--tRNA ligase alpha subunit (338 aa).

Residue Glu-252 coordinates Mg(2+).

It belongs to the class-II aminoacyl-tRNA synthetase family. Phe-tRNA synthetase alpha subunit type 1 subfamily. As to quaternary structure, tetramer of two alpha and two beta subunits. Mg(2+) serves as cofactor.

The protein resides in the cytoplasm. It catalyses the reaction tRNA(Phe) + L-phenylalanine + ATP = L-phenylalanyl-tRNA(Phe) + AMP + diphosphate + H(+). In Pseudomonas syringae pv. syringae (strain B728a), this protein is Phenylalanine--tRNA ligase alpha subunit.